The chain runs to 188 residues: HTH-type transcriptional regulator Mb3439c (188 aa).

One can recognise an HTH tetR-type domain in the interval E17 to L77. The segment at residues S40–F59 is a DNA-binding region (H-T-H motif).

Its function is as follows. Negatively regulates the expression of sulfate ester dioxygenase Mb3440 and its own expression. The protein is HTH-type transcriptional regulator Mb3439c of Mycobacterium bovis (strain ATCC BAA-935 / AF2122/97).